Here is a 407-residue protein sequence, read N- to C-terminus: 1-deoxy-D-xylulose 5-phosphate reductoisomerase (407 aa).

Residues threonine 25, glycine 26, serine 27, isoleucine 28, asparagine 53, and asparagine 136 each coordinate NADPH. 1-deoxy-D-xylulose 5-phosphate is bound at residue lysine 137. Residue glutamate 138 participates in NADPH binding. Aspartate 162 is a binding site for Mn(2+). The 1-deoxy-D-xylulose 5-phosphate site is built by serine 163, glutamate 164, serine 188, and histidine 211. Residue glutamate 164 coordinates Mn(2+). Position 217 (glycine 217) interacts with NADPH. Positions 224, 229, 230, and 233 each coordinate 1-deoxy-D-xylulose 5-phosphate. Glutamate 233 is a binding site for Mn(2+).

Belongs to the DXR family. Mg(2+) serves as cofactor. The cofactor is Mn(2+).

The catalysed reaction is 2-C-methyl-D-erythritol 4-phosphate + NADP(+) = 1-deoxy-D-xylulose 5-phosphate + NADPH + H(+). It participates in isoprenoid biosynthesis; isopentenyl diphosphate biosynthesis via DXP pathway; isopentenyl diphosphate from 1-deoxy-D-xylulose 5-phosphate: step 1/6. In terms of biological role, catalyzes the NADPH-dependent rearrangement and reduction of 1-deoxy-D-xylulose-5-phosphate (DXP) to 2-C-methyl-D-erythritol 4-phosphate (MEP). The protein is 1-deoxy-D-xylulose 5-phosphate reductoisomerase of Nitrobacter winogradskyi (strain ATCC 25391 / DSM 10237 / CIP 104748 / NCIMB 11846 / Nb-255).